Reading from the N-terminus, the 346-residue chain is Annexin A1 (346 aa).

The residue at position 2 (Ala2) is an N-acetylalanine. Ser5 bears the Phosphoserine; by TRPM7 mark. Residue Gln19 forms an Isoglutamyl lysine isopeptide (Gln-Lys) (interchain with K-?) linkage. Position 21 is a phosphotyrosine; by EGFR (Tyr21). The interval 25–47 (VKGSKGGPGSAVSPYPTFNPSSD) is disordered. Phosphoserine occurs at positions 34 and 37. Thr41 carries the phosphothreonine modification. Annexin repeat units lie at residues 42–113 (FNPS…ALLK), 114–185 (TPAQ…SLAK), 197–269 (DLAD…VVVK), and 273–344 (SKPM…ALCG). At Lys58 the chain carries N6-acetyllysine. 11 residues coordinate Ca(2+): Gly59, Val60, Glu62, Lys97, Leu100, Glu105, Met127, Gly129, Gly131, Thr132, and Glu134. Thr136 is subject to Phosphothreonine. Ca(2+)-binding residues include Asp171, Gly210, and Arg213. Lys214 is covalently cross-linked (Glycyl lysine isopeptide (Lys-Gly) (interchain with G-Cter in SUMO1); alternate). Residue Lys214 forms a Glycyl lysine isopeptide (Lys-Gly) (interchain with G-Cter in SUMO2); alternate linkage. Gly215 is a Ca(2+) binding site. The residue at position 239 (Lys239) is an N6-acetyllysine. Positions 253, 255, and 256 each coordinate Ca(2+). Residue Lys257 forms a Glycyl lysine isopeptide (Lys-Gly) (interchain with G-Cter in SUMO1) linkage. Ca(2+)-binding residues include Glu261, Met286, Gly288, and Gly290. Residue Lys312 is modified to N6-acetyllysine. Cys324 and Cys343 are joined by a disulfide. Residues Leu328, Glu330, and Thr331 each contribute to the Ca(2+) site. Residue Lys332 forms a Glycyl lysine isopeptide (Lys-Gly) (interchain with G-Cter in SUMO1) linkage. A Ca(2+)-binding site is contributed by Glu336.

It belongs to the annexin family. Homodimer; non-covalently linked. Homodimer; linked by transglutamylation. Homodimers linked by transglutamylation are observed in placenta, but not in other tissues. Interacts with S100A11. Heterotetramer, formed by two molecules each of S100A11 and ANXA1. Interacts with DYSF. Interacts with EGFR. Phosphorylated by EGFR. Phosphorylated by protein kinase C and TRPM7. Phosphorylated in response to EGF treatment. In terms of processing, sumoylated. Post-translationally, proteolytically cleaved by cathepsin CTSG to release the active N-terminal peptide Ac2-26. In terms of tissue distribution, detected in lung and spleen (at protein level).

It is found in the nucleus. The protein localises to the cytoplasm. It localises to the cell projection. The protein resides in the cilium. Its subcellular location is the basolateral cell membrane. It is found in the lateral cell membrane. The protein localises to the early endosome. It localises to the cell membrane. The protein resides in the cytoplasmic vesicle membrane. Its subcellular location is the apical cell membrane. It is found in the membrane. The protein localises to the endosome. It localises to the secreted. The protein resides in the extracellular space. Its subcellular location is the extracellular exosome. It is found in the cytoplasmic vesicle. The protein localises to the secretory vesicle lumen. It localises to the phagocytic cup. Functionally, plays important roles in the innate immune response as effector of glucocorticoid-mediated responses and regulator of the inflammatory process. Has anti-inflammatory activity. Plays a role in glucocorticoid-mediated down-regulation of the early phase of the inflammatory response. Contributes to the adaptive immune response by enhancing signaling cascades that are triggered by T-cell activation, regulates differentiation and proliferation of activated T-cells. Promotes the differentiation of T-cells into Th1 cells and negatively regulates differentiation into Th2 cells. Has no effect on unstimulated T-cells. Negatively regulates hormone exocytosis via activation of the formyl peptide receptors and reorganization of the actin cytoskeleton. Has high affinity for Ca(2+) and can bind up to eight Ca(2+) ions. Displays Ca(2+)-dependent binding to phospholipid membranes. Plays a role in the formation of phagocytic cups and phagosomes. Plays a role in phagocytosis by mediating the Ca(2+)-dependent interaction between phagosomes and the actin cytoskeleton. In terms of biological role, functions at least in part by activating the formyl peptide receptors and downstream signaling cascades. Promotes chemotaxis of granulocytes and monocytes via activation of the formyl peptide receptors. Promotes rearrangement of the actin cytoskeleton, cell polarization and cell migration. Promotes resolution of inflammation and wound healing. Acts via neutrophil N-formyl peptide receptors to enhance the release of CXCL2. The protein is Annexin A1 (ANXA1) of Sus scrofa (Pig).